We begin with the raw amino-acid sequence, 427 residues long: Peptidase B (427 aa).

Mn(2+) is bound by residues Lys195 and Asp200. The active site involves Lys207. Mn(2+) is bound by residues Asp218, Asp277, and Glu279. Residue Arg281 is part of the active site.

It belongs to the peptidase M17 family. Homohexamer. The cofactor is Mn(2+).

The protein resides in the cytoplasm. It catalyses the reaction Release of an N-terminal amino acid, Xaa, from a peptide or arylamide. Xaa is preferably Glu or Asp but may be other amino acids, including Leu, Met, His, Cys and Gln.. In terms of biological role, probably plays an important role in intracellular peptide degradation. This is Peptidase B from Salmonella agona (strain SL483).